The primary structure comprises 20 residues: Dentinal fluid transport-stimulating peptide (20 aa).

Positions 1 to 20 are disordered; it reads GVIAWELQHNEPGRKDSTAG. A compositionally biased stretch (basic and acidic residues) spans 8 to 20; sequence QHNEPGRKDSTAG.

Its function is as follows. This peptide stimulates the transport of dentinal fluid, which is important for the prevention of dental caries. In Rattus norvegicus (Rat), this protein is Dentinal fluid transport-stimulating peptide.